The primary structure comprises 501 residues: Glutathione gamma-glutamylcysteinyltransferase 1 (501 aa).

A Peptidase C83 domain is found at 1–221; sequence MAMAGLYRRL…GFMLISRPHR (221 aa). Catalysis depends on residues Cys56, His162, and Asp180.

This sequence belongs to the phytochelatin synthase family. As to expression, expressed in roots, nodules and leaves.

It catalyses the reaction [Glu(-Cys)](n)-Gly + glutathione + H(+) = [Glu(-Cys)](n+1)-Gly + glycine. Its activity is regulated as follows. Requires cadmium for activity. Also activated in vitro by Zn(2+), Cu(2+), Fe(2+) or Fe(3+) ions, but not by Co(2+) or Ni(2+) ions. In terms of biological role, involved in the synthesis of phytochelatins (PC) and homophytochelatins (hPC), the heavy-metal-binding peptides of plants. The polypeptide is Glutathione gamma-glutamylcysteinyltransferase 1 (PCS1) (Lotus japonicus (Lotus corniculatus var. japonicus)).